The primary structure comprises 67 residues: uncharacterized protein (67 aa).

Transmembrane regions (helical) follow at residues Glu10 to Trp30 and Leu40 to Phe60.

Belongs to the plectrovirus ORF10 family.

It localises to the host membrane. This is an uncharacterized protein from Spiroplasma citri (SpV1).